Consider the following 87-residue polypeptide: MKTLLLTLVVVTIVCLDLGYTRTCLISPSSTPQTCPQGQGICFLKAQCDKFCSIRGPVIEQGCVATCPQFRSNYRSLLCCTTDNCNH.

An N-terminal signal peptide occupies residues 1 to 21 (MKTLLLTLVVVTIVCLDLGYT). Cystine bridges form between C24-C42, C35-C63, C48-C52, C67-C79, and C80-C85.

This sequence belongs to the three-finger toxin family. Long-chain subfamily. Kappa-neurotoxin sub-subfamily. As to quaternary structure, homo- and heterodimer; non-covalently linked. As to expression, expressed by the venom gland.

Its subcellular location is the secreted. Its function is as follows. Postsynaptic neurotoxin that binds and inhibits neuronal nicotinic acetylcholine receptors (nAChR) with high affinity (IC(50)&lt;100 nM). Is a selective, and slowly reversible antagonist of alpha-3/CHRNA3-containing and some alpha-4/CHRNA4-containing AChRs. In Bungarus candidus (Malayan krait), this protein is Kappa 1b-bungarotoxin.